The following is a 488-amino-acid chain: Palmitoyltransferase ZDHHC14 (488 aa).

Topologically, residues 1–60 are cytoplasmic; it reads MPPGGGGPMKDCEYSQISTHSSSPMESPHKKKKIAARRKWEVFPGRNKFFCNGRIMMARQ. Residues 61 to 81 traverse the membrane as a helical segment; it reads TGVFYLTLVLILVTSGLFFAF. The Lumenal portion of the chain corresponds to 82-89; that stretch reads DCPYLAVK. A helical membrane pass occupies residues 90 to 110; sequence ITPAIPAVAGILFFFVMGTLL. The Cytoplasmic portion of the chain corresponds to 111-208; sequence RTSFSDPGVL…GNCVGKRNYR (98 aa). In terms of domain architecture, DHHC spans 165–215; the sequence is KYCFTCKIFRPPRASHCSLCDNCVERFDHHCPWVGNCVGKRNYRFFYMFIL. The S-palmitoyl cysteine intermediate role is filled by Cys-195. A helical transmembrane segment spans residues 209–229; the sequence is FFYMFILSLSFLTVFIFAFVI. The Lumenal portion of the chain corresponds to 230 to 255; sequence THVILRSQQTGFLNALKDSPASVLEA. Residues 256 to 276 form a helical membrane-spanning segment; that stretch reads VVCFFSVWSIVGLSGFHTYLI. Residues 277–488 are Cytoplasmic-facing; sequence SSNQTTNEDI…VRGLVKLSSV (212 aa). Ser-455 is modified (phosphoserine).

The protein belongs to the DHHC palmitoyltransferase family. ERF2/ZDHHC9 subfamily. In terms of tissue distribution, widely expressed.

The protein localises to the endoplasmic reticulum membrane. It localises to the golgi apparatus. It is found in the golgi stack membrane. The catalysed reaction is L-cysteinyl-[protein] + hexadecanoyl-CoA = S-hexadecanoyl-L-cysteinyl-[protein] + CoA. Its function is as follows. Palmitoyltransferase that could catalyze the addition of palmitate onto various protein substrates. May have a palmitoyltransferase activity toward the beta-2 adrenergic receptor/ADRB2 and thereby regulate G protein-coupled receptor signaling. May play a role in cell differentiation and apoptosis. In Homo sapiens (Human), this protein is Palmitoyltransferase ZDHHC14.